The sequence spans 501 residues: Lysine--tRNA ligase (501 aa).

Mg(2+) is bound by residues Glu-404 and Glu-411.

Belongs to the class-II aminoacyl-tRNA synthetase family. As to quaternary structure, homodimer. Mg(2+) is required as a cofactor.

The protein resides in the cytoplasm. The catalysed reaction is tRNA(Lys) + L-lysine + ATP = L-lysyl-tRNA(Lys) + AMP + diphosphate. This Campylobacter jejuni subsp. jejuni serotype O:6 (strain 81116 / NCTC 11828) protein is Lysine--tRNA ligase.